A 156-amino-acid polypeptide reads, in one-letter code: ATP synthase subunit b (156 aa).

The chain crosses the membrane as a helical span at residues 7 to 27 (FFAQMVVFFILWWVVAKFIWP).

It belongs to the ATPase B chain family. In terms of assembly, F-type ATPases have 2 components, F(1) - the catalytic core - and F(0) - the membrane proton channel. F(1) has five subunits: alpha(3), beta(3), gamma(1), delta(1), epsilon(1). F(0) has three main subunits: a(1), b(2) and c(10-14). The alpha and beta chains form an alternating ring which encloses part of the gamma chain. F(1) is attached to F(0) by a central stalk formed by the gamma and epsilon chains, while a peripheral stalk is formed by the delta and b chains.

It is found in the cell inner membrane. In terms of biological role, f(1)F(0) ATP synthase produces ATP from ADP in the presence of a proton or sodium gradient. F-type ATPases consist of two structural domains, F(1) containing the extramembraneous catalytic core and F(0) containing the membrane proton channel, linked together by a central stalk and a peripheral stalk. During catalysis, ATP synthesis in the catalytic domain of F(1) is coupled via a rotary mechanism of the central stalk subunits to proton translocation. Its function is as follows. Component of the F(0) channel, it forms part of the peripheral stalk, linking F(1) to F(0). In Cupriavidus necator (strain ATCC 17699 / DSM 428 / KCTC 22496 / NCIMB 10442 / H16 / Stanier 337) (Ralstonia eutropha), this protein is ATP synthase subunit b.